We begin with the raw amino-acid sequence, 505 residues long: ATP synthase subunit alpha, chloroplastic (505 aa).

170 to 177 (GDRQTGKT) serves as a coordination point for ATP.

The protein belongs to the ATPase alpha/beta chains family. In terms of assembly, F-type ATPases have 2 components, CF(1) - the catalytic core - and CF(0) - the membrane proton channel. CF(1) has five subunits: alpha(3), beta(3), gamma(1), delta(1), epsilon(1). CF(0) has four main subunits: a, b, b' and c.

Its subcellular location is the plastid. It localises to the chloroplast thylakoid membrane. The enzyme catalyses ATP + H2O + 4 H(+)(in) = ADP + phosphate + 5 H(+)(out). Its function is as follows. Produces ATP from ADP in the presence of a proton gradient across the membrane. The alpha chain is a regulatory subunit. The polypeptide is ATP synthase subunit alpha, chloroplastic (Carica papaya (Papaya)).